A 133-amino-acid chain; its full sequence is DNA-directed RNA polymerase subunit omega (133 aa).

The protein belongs to the RNA polymerase subunit omega family. In terms of assembly, the RNAP catalytic core consists of 2 alpha, 1 beta, 1 beta' and 1 omega subunit. When a sigma factor is associated with the core the holoenzyme is formed, which can initiate transcription.

The catalysed reaction is RNA(n) + a ribonucleoside 5'-triphosphate = RNA(n+1) + diphosphate. Functionally, promotes RNA polymerase assembly. Latches the N- and C-terminal regions of the beta' subunit thereby facilitating its interaction with the beta and alpha subunits. The polypeptide is DNA-directed RNA polymerase subunit omega (Mesorhizobium japonicum (strain LMG 29417 / CECT 9101 / MAFF 303099) (Mesorhizobium loti (strain MAFF 303099))).